The primary structure comprises 100 residues: Urease subunit gamma (100 aa).

The protein belongs to the urease gamma subunit family. Heterotrimer of UreA (gamma), UreB (beta) and UreC (alpha) subunits. Three heterotrimers associate to form the active enzyme.

The protein resides in the cytoplasm. It catalyses the reaction urea + 2 H2O + H(+) = hydrogencarbonate + 2 NH4(+). It functions in the pathway nitrogen metabolism; urea degradation; CO(2) and NH(3) from urea (urease route): step 1/1. The chain is Urease subunit gamma from Streptomyces coelicolor (strain ATCC BAA-471 / A3(2) / M145).